Consider the following 368-residue polypeptide: tRNA-specific 2-thiouridylase MnmA (368 aa).

Residues 12-19 and M38 contribute to the ATP site; that span reads GMSGGVDS. The tract at residues 98–100 is interaction with target base in tRNA; the sequence is NPD. C103 (nucleophile) is an active-site residue. C103 and C200 are oxidised to a cystine. Residue G128 participates in ATP binding. The interaction with tRNA stretch occupies residues 150-152; it reads KDQ. Residue C200 is the Cysteine persulfide intermediate of the active site. Residues 311-312 form an interaction with tRNA region; sequence RY.

The protein belongs to the MnmA/TRMU family.

It is found in the cytoplasm. The catalysed reaction is S-sulfanyl-L-cysteinyl-[protein] + uridine(34) in tRNA + AH2 + ATP = 2-thiouridine(34) in tRNA + L-cysteinyl-[protein] + A + AMP + diphosphate + H(+). Its function is as follows. Catalyzes the 2-thiolation of uridine at the wobble position (U34) of tRNA, leading to the formation of s(2)U34. The protein is tRNA-specific 2-thiouridylase MnmA of Aeromonas salmonicida (strain A449).